A 742-amino-acid chain; its full sequence is 5-methyltetrahydropteroyltriglutamate--homocysteine methyltransferase (742 aa).

5-methyltetrahydropteroyltri-L-glutamate-binding positions include arginine 18–lysine 21 and lysine 112. L-homocysteine-binding positions include isoleucine 420 to serine 422 and glutamate 473. L-methionine-binding positions include isoleucine 420–serine 422 and glutamate 473. Tryptophan 550 lines the 5-methyltetrahydropteroyltri-L-glutamate pocket. Position 588 (aspartate 588) interacts with L-homocysteine. Aspartate 588 is an L-methionine binding site. 5-methyltetrahydropteroyltri-L-glutamate is bound at residue glutamate 594. Positions 630, 632, and 654 each coordinate Zn(2+). Histidine 683 (proton donor) is an active-site residue. A Zn(2+)-binding site is contributed by cysteine 715.

This sequence belongs to the vitamin-B12 independent methionine synthase family. It depends on Zn(2+) as a cofactor.

The catalysed reaction is 5-methyltetrahydropteroyltri-L-glutamate + L-homocysteine = tetrahydropteroyltri-L-glutamate + L-methionine. The protein operates within amino-acid biosynthesis; L-methionine biosynthesis via de novo pathway; L-methionine from L-homocysteine (MetE route): step 1/1. Functionally, catalyzes the transfer of a methyl group from 5-methyltetrahydrofolate to homocysteine resulting in methionine formation. The protein is 5-methyltetrahydropteroyltriglutamate--homocysteine methyltransferase of Staphylococcus aureus (strain USA300).